A 283-amino-acid polypeptide reads, in one-letter code: MALLSFERKYRVRGGTLVGGDLFDFWVGPFYVGFFGVTTAFFALLGTILIFWGASQQGTFNPWLINIAPPDLSYGLGLAPLLEGGLWQIITICATGAFISWALREVEICRKLGMGYHVPFGFAAAIIAYMTLVIFRPLLMGAWGHGFPYGIFSHLDWVSNVGYAYLHFHYNPAHMLAVTLFFTTTLALALHGGLILSACNPEKGEEAKTPDHEDTFFRDFIGYSVGTLGIHRLGYLLAINAGLWSAICIIISGPVWTAGWPEWWNWWLDMPIWGEPIAVIGGM.

Transmembrane regions (helical) follow at residues 33-56 (GFFG…GASQ), 85-113 (GLWQ…RKLG), and 116-141 (YHVP…LLMG). 2 residues coordinate (7R,8Z)-bacteriochlorophyll b: H154 and H174. The helical transmembrane segment at 171 to 200 (NPAHMLAVTLFFTTTLALALHGGLILSACN) threads the bilayer. A Fe cation-binding site is contributed by H191. F217 contributes to the a ubiquinone binding site. A helical transmembrane segment spans residues 226–252 (GTLGIHRLGYLLAINAGLWSAICIIIS). Residue H231 participates in Fe cation binding.

The protein belongs to the reaction center PufL/M/PsbA/D family. As to quaternary structure, reaction center is composed of four bacteriochlorophylls, two bacteriopheophytins, two ubiquinones, one iron, and three highly hydrophobic polypeptide chains (designated L, M, and H).

It localises to the cellular chromatophore membrane. Its function is as follows. The reaction center is a membrane-bound complex that mediates the initial photochemical event in the electron transfer process of photosynthesis. This chain is Reaction center protein L chain (pufL), found in Roseobacter denitrificans (strain ATCC 33942 / OCh 114) (Erythrobacter sp. (strain OCh 114)).